Consider the following 236-residue polypeptide: UPF0257 lipoprotein YnfC (236 aa).

Positions 1 to 16 (MKYKLLPCLLAIFLTG) are cleaved as a signal peptide. C17 carries N-palmitoyl cysteine lipidation. The S-diacylglycerol cysteine moiety is linked to residue C17.

This sequence belongs to the UPF0257 family.

It is found in the cell membrane. This Escherichia coli O17:K52:H18 (strain UMN026 / ExPEC) protein is UPF0257 lipoprotein YnfC.